The sequence spans 450 residues: MRECISIHIGQAGIQVGNACWELYCLEHGIQPDGQMPGDKTVGGGDDAFNTFFSETGAGKHVPRAVFVDLEPTVIDEVRTGTYRQLFHPEQLISGKEDAANNFARGHYTIGKEIVDLCLDRIRKLADNCTGLQGFLVFNAVGGGTGSGLGSLLLERLSVDYGKKSKLGFTVYPSPQVSTSVVEPYNSVLSTHSLLEHTDVSILLDNEAIYDICRRSLNIERPTYTNLNRLVSQVISSLTASLRFDGALNVDVTEFQTNLVPYPRIHFMLSSYAPVISAEKAFHEQLSVAEITNSAFEPASMMAKCDPRHGKYMACCLMYRGDVVPKDVNAAVGTIKTKRTIQFVDWCPTGFKCGINYQPPTVVPGGDLAKVQRAVCMISNSTSVAEVFSRIDHKFDLMYAKRAFVHWYVGEGMEEGEFSEAREDLAALEKDYEEVGAEGGDDEDDEGEEY.

Residues Gln11, Glu71, Gly144, Thr145, Thr179, Asn206, and Asn228 each coordinate GTP. Glu71 lines the Mg(2+) pocket. Glu254 is a catalytic residue. Thr349 carries the post-translational modification Phosphothreonine. Positions 430–450 (KDYEEVGAEGGDDEDDEGEEY) are disordered. The segment covering 431 to 450 (DYEEVGAEGGDDEDDEGEEY) has biased composition (acidic residues).

The protein belongs to the tubulin family. Dimer of alpha and beta chains. A typical microtubule is a hollow water-filled tube with an outer diameter of 25 nm and an inner diameter of 15 nM. Alpha-beta heterodimers associate head-to-tail to form protofilaments running lengthwise along the microtubule wall with the beta-tubulin subunit facing the microtubule plus end conferring a structural polarity. Microtubules usually have 13 protofilaments but different protofilament numbers can be found in some organisms and specialized cells. Interacts with TFCB. Mg(2+) serves as cofactor. Undergoes a tyrosination/detyrosination cycle, the cyclic removal and re-addition of a C-terminal tyrosine residue by the enzymes tubulin tyrosine carboxypeptidase (TTCP) and tubulin tyrosine ligase (TTL), respectively. Post-translationally, acetylation of alpha chains at Lys-40 stabilizes microtubules and affects affinity and processivity of microtubule motors. This modification has a role in multiple cellular functions, ranging from cell motility, cell cycle progression or cell differentiation to intracellular trafficking and signaling.

The protein localises to the cytoplasm. It localises to the cytoskeleton. The catalysed reaction is GTP + H2O = GDP + phosphate + H(+). Its function is as follows. Tubulin is the major constituent of microtubules, a cylinder consisting of laterally associated linear protofilaments composed of alpha- and beta-tubulin heterodimers. Microtubules grow by the addition of GTP-tubulin dimers to the microtubule end, where a stabilizing cap forms. Below the cap, tubulin dimers are in GDP-bound state, owing to GTPase activity of alpha-tubulin. This chain is Tubulin alpha-6 chain (TUBA6), found in Arabidopsis thaliana (Mouse-ear cress).